The primary structure comprises 238 residues: tRNA (guanine-N(7)-)-methyltransferase (238 aa).

Glutamate 68, glutamate 93, aspartate 120, and aspartate 143 together coordinate S-adenosyl-L-methionine. Residue aspartate 143 is part of the active site. Substrate-binding positions include lysine 147, aspartate 179, and 216–219; that span reads TKFE.

The protein belongs to the class I-like SAM-binding methyltransferase superfamily. TrmB family.

It carries out the reaction guanosine(46) in tRNA + S-adenosyl-L-methionine = N(7)-methylguanosine(46) in tRNA + S-adenosyl-L-homocysteine. It functions in the pathway tRNA modification; N(7)-methylguanine-tRNA biosynthesis. In terms of biological role, catalyzes the formation of N(7)-methylguanine at position 46 (m7G46) in tRNA. This Shewanella baltica (strain OS223) protein is tRNA (guanine-N(7)-)-methyltransferase.